We begin with the raw amino-acid sequence, 434 residues long: MAKIGFVSLGCPKALVDSEQILSRLKALGYETSPSYEEAELVIVNTCGFINEAVEESLEVIGEALKENGKVVVTGCLGARPEKIRERHPQVLAITGPGEVERVLEAVQVVLPAPRDPFLDLIPPQVKLTPRHYAYVKLSEGCDHRCSFCIIPKLRGRLRSRDAADVLAEAARLVATGTKELLLVAQDLSAYGVDLGHRESLWGDRPVRAELKDLLAHMAELGAWIRLHYVYPYPHVKDLLPLMAEGKVLPYLDVPLQHASPRILRLMRRPGGYESHLKALKAWREVVPELALRSTFIVGFPGETEEDFQILLDFLEEAELDRVGVFAYSPVEGAEANRLPDPVPEEVKEERKARLLELQARVSLRKNQRFVGKTLEVLVDELPEPGLAVGRTYRDSPGIDGVVYVETDGTVRVGERIPVRILRADTYDLHGVQA.

The 111-residue stretch at 2–112 folds into the MTTase N-terminal domain; the sequence is AKIGFVSLGC…VLEAVQVVLP (111 aa). [4Fe-4S] cluster-binding residues include Cys-11, Cys-47, Cys-76, Cys-142, Cys-146, and Cys-149. Positions 128–365 constitute a Radical SAM core domain; that stretch reads LTPRHYAYVK…LELQARVSLR (238 aa). Residues 368 to 434 form the TRAM domain; that stretch reads QRFVGKTLEV…DTYDLHGVQA (67 aa).

The protein belongs to the methylthiotransferase family. RimO subfamily. Requires [4Fe-4S] cluster as cofactor.

It is found in the cytoplasm. It catalyses the reaction L-aspartate(89)-[ribosomal protein uS12]-hydrogen + (sulfur carrier)-SH + AH2 + 2 S-adenosyl-L-methionine = 3-methylsulfanyl-L-aspartate(89)-[ribosomal protein uS12]-hydrogen + (sulfur carrier)-H + 5'-deoxyadenosine + L-methionine + A + S-adenosyl-L-homocysteine + 2 H(+). In terms of biological role, catalyzes the methylthiolation of an aspartic acid residue of ribosomal protein uS12. The polypeptide is Ribosomal protein uS12 methylthiotransferase RimO (Thermus thermophilus (strain ATCC 27634 / DSM 579 / HB8)).